A 225-amino-acid chain; its full sequence is UPF0758 protein XOO0462 (225 aa).

The region spanning 102 to 224 is the MPN domain; it reads ALSDPPSVGR…PVSLAERGWL (123 aa). Zn(2+)-binding residues include His173, His175, and Asp186. Residues 173–186 carry the JAMM motif motif; sequence HNHPSGNPEPSEAD.

It belongs to the UPF0758 family.

The polypeptide is UPF0758 protein XOO0462 (Xanthomonas oryzae pv. oryzae (strain MAFF 311018)).